The following is a 313-amino-acid chain: Maintenance of mitochondrial morphology protein 1 (313 aa).

The Lumenal segment spans residues 1–12 (MIHLPQGSFTQG). A helical transmembrane segment spans residues 13–33 (LIVGQLLTLAIIYVFLRFFLF). Over 34–313 (CSPIPKSVAN…APQEESSNED (280 aa)) the chain is Cytoplasmic. Over residues 42-63 (ANSPKQTGNETPDETPSTPLSN) the composition is skewed to polar residues. The segment at 42 to 65 (ANSPKQTGNETPDETPSTPLSNNK) is disordered. The region spanning 90 to 288 (EPESLDWFNV…SPQFQQIAIP (199 aa)) is the SMP-LTD domain.

It belongs to the MMM1 family. Homodimer. Component of the ER-mitochondria encounter structure (ERMES) or MDM complex, composed of mmm1, mdm10, mdm12 and mdm34. A mmm1 homodimer associates with one molecule of mdm12 on each side in a pairwise head-to-tail manner, and the SMP-LTD domains of mmm1 and mdm12 generate a continuous hydrophobic tunnel for phospholipid trafficking.

It localises to the endoplasmic reticulum membrane. In terms of biological role, component of the ERMES/MDM complex, which serves as a molecular tether to connect the endoplasmic reticulum (ER) and mitochondria. Components of this complex are involved in the control of mitochondrial shape and protein biogenesis, and function in nonvesicular lipid trafficking between the ER and mitochondria. The mdm12-mmm1 subcomplex functions in the major beta-barrel assembly pathway that is responsible for biogenesis of all outer membrane beta-barrel proteins, and acts in a late step after the SAM complex. The mdm10-mdm12-mmm1 subcomplex further acts in the TOM40-specific pathway after the action of the mdm12-mmm1 complex. Essential for establishing and maintaining the structure of mitochondria and maintenance of mtDNA nucleoids. This is Maintenance of mitochondrial morphology protein 1 from Schizosaccharomyces pombe (strain 972 / ATCC 24843) (Fission yeast).